The sequence spans 761 residues: Signal transducer and transcription activator (761 aa).

The 65-residue stretch at 594 to 658 (WKAGCIMGFI…APWTARDFQV (65 aa)) folds into the SH2 domain. Residue tyrosine 711 is modified to Phosphotyrosine; by JAK.

It belongs to the transcription factor STAT family. In terms of assembly, forms a homodimer or a heterodimer with a related family member. In terms of processing, tyrosine phosphorylated by hopscotch. Phosphorylation is required for DNA-binding activity and dimerization.

It is found in the cytoplasm. The protein localises to the nucleus. Functionally, might play a role in signal transduction and activation of transcription. Plays an important role in the segmental pattern formation in the early embryo by activating specific stripes of pair rule gene expression in early development as part of the Janus kinase-STAT pathway. Might play a role in male germline stem cell maintenance. This is Signal transducer and transcription activator (Stat92E) from Drosophila melanogaster (Fruit fly).